The primary structure comprises 533 residues: Putative replication factor C large subunit (533 aa).

A compositionally biased stretch (polar residues) spans 1 to 11 (MSKTAKNTKTI). The tract at residues 1–31 (MSKTAKNTKTIKSVKSVNKDNKPNKDNKDDK) is disordered. Residues 17-31 (VNKDNKPNKDNKDDK) are compositionally biased toward basic and acidic residues.

Belongs to the activator 1 large subunit family.

Part of the RFC clamp loader complex which loads the PCNA sliding clamp onto DNA. This is Putative replication factor C large subunit from Acanthamoeba polyphaga (Amoeba).